The following is a 108-amino-acid chain: ATPase inhibitor, mitochondrial (108 aa).

Residues methionine 1 to phenylalanine 25 constitute a mitochondrion transit peptide. Residues phenylalanine 25 to glycine 48 form a disordered region. The segment at serine 26–glutamine 52 is N-terminal inhibitory region. Positions alanine 69–aspartate 108 form a coiled coil. The antiparallel alpha-helical coiled coil region stretch occupies residues histidine 74–aspartate 106. Position 103 is an N6-succinyllysine (lysine 103).

The protein belongs to the ATPase inhibitor family. Homodimer; represents the active form and is present at a pH value below 6.5. Homotetramer; represents the inactive form and is present at a pH value above 7.0.

The protein localises to the mitochondrion. In terms of biological role, endogenous F(1)F(o)-ATPase inhibitor limiting ATP depletion when the mitochondrial membrane potential falls below a threshold and the F(1)F(o)-ATP synthase starts hydrolyzing ATP to pump protons out of the mitochondrial matrix. Required to avoid the consumption of cellular ATP when the F(1)F(o)-ATP synthase enzyme acts as an ATP hydrolase. Indirectly acts as a regulator of heme synthesis in erythroid tissues: regulates heme synthesis by modulating the mitochondrial pH and redox potential, allowing FECH to efficiently catalyze the incorporation of iron into protoporphyrin IX to produce heme. The chain is ATPase inhibitor, mitochondrial from Sus scrofa (Pig).